The chain runs to 357 residues: Sorbitol dehydrogenase (357 aa).

At alanine 2 the chain carries N-acetylalanine. Cysteine 45 serves as a coordination point for Zn(2+). Tyrosine 51 contributes to the substrate binding site. Zn(2+)-binding residues include histidine 70 and glutamate 71. Position 156 (glutamate 156) interacts with substrate. The NAD(+) site is built by isoleucine 184, aspartate 204, and arginine 209. Phosphoserine occurs at positions 211 and 225. NAD(+)-binding positions include 273-275 and 297-299; these read VGL and VFR. Positions 299 and 300 each coordinate substrate.

Belongs to the zinc-containing alcohol dehydrogenase family. Homotetramer. The cofactor is Zn(2+).

The protein localises to the mitochondrion membrane. It is found in the cell projection. Its subcellular location is the cilium. It localises to the flagellum. It carries out the reaction xylitol + NAD(+) = D-xylulose + NADH + H(+). The enzyme catalyses L-iditol + NAD(+) = keto-L-sorbose + NADH + H(+). The catalysed reaction is keto-D-fructose + NADH + H(+) = D-sorbitol + NAD(+). Functionally, polyol dehydrogenase that catalyzes the reversible NAD(+)-dependent oxidation of various sugar alcohols. Is active with xylitol, L-iditol and D-sorbitol (D-glucitol) as substrates, leading to the C2-oxidized products D-xylulose, L-sorbose and D-fructose, respectively. Is a key enzyme in the polyol pathway that interconverts glucose and fructose via sorbitol, which constitutes an important alternate route for glucose metabolism. May play a role in sperm motility by using sorbitol as an alternative energy source for sperm motility. In Macaca fascicularis (Crab-eating macaque), this protein is Sorbitol dehydrogenase (SORD).